The sequence spans 372 residues: Enolase (372 aa).

Substrate-binding residues include histidine 95 and glutamate 104. The Proton donor role is filled by glutamate 147. Mg(2+) is bound by residues aspartate 182, glutamate 232, and aspartate 257. Substrate is bound by residues glutamate 232 and aspartate 257. Lysine 282 functions as the Proton acceptor in the catalytic mechanism. Substrate contacts are provided by residues serine 309–serine 312 and lysine 333.

It belongs to the enolase family. Homodimer. Requires Mg(2+) as cofactor.

It localises to the cytoplasm. The enzyme catalyses (2R)-2-phosphoglycerate = phosphoenolpyruvate + H2O. It participates in carbohydrate degradation; glycolysis; pyruvate from D-glyceraldehyde 3-phosphate: step 4/5. This is Enolase (ENO) from Chlamydomonas reinhardtii (Chlamydomonas smithii).